We begin with the raw amino-acid sequence, 149 residues long: Nucleoside diphosphate kinase (149 aa).

The ATP site is built by Lys-9, Phe-57, Arg-85, Thr-91, Arg-102, and Asn-112. His-115 acts as the Pros-phosphohistidine intermediate in catalysis.

This sequence belongs to the NDK family. Homotetramer. Mg(2+) is required as a cofactor.

Its subcellular location is the cytoplasm. It catalyses the reaction dZDP + ATP = dZTP + ADP. The catalysed reaction is a 2'-deoxyribonucleoside 5'-diphosphate + ATP = a 2'-deoxyribonucleoside 5'-triphosphate + ADP. It carries out the reaction a ribonucleoside 5'-diphosphate + ATP = a ribonucleoside 5'-triphosphate + ADP. It participates in purine metabolism. Functionally, major role in the synthesis of nucleoside triphosphates other than ATP. The ATP gamma phosphate is transferred to the NDP beta phosphate via a ping-pong mechanism, using a phosphorylated active-site intermediate. (Microbial infection) Catalyzes the phosphorylation of dZDP to dZTP, when the bacterium is infected by a phage that produces the substrate for the synthesis of dZTP (2- amino-2'-deoxyadenosine 5'-triphosphate), which is then used by the phage as a DNA polymerase substrate. This chain is Nucleoside diphosphate kinase, found in Picosynechococcus sp. (strain ATCC 27264 / PCC 7002 / PR-6) (Agmenellum quadruplicatum).